The chain runs to 466 residues: Cysteine--tRNA ligase (466 aa).

Position 29 (C29) interacts with Zn(2+). The 'HIGH' region signature appears at 31–41 (ATVQAAPHIGH). Zn(2+) is bound by residues C208, H233, and E237. Residues 264 to 268 (KMSKS) carry the 'KMSKS' region motif. Residue K267 participates in ATP binding.

It belongs to the class-I aminoacyl-tRNA synthetase family. Monomer. Zn(2+) serves as cofactor.

It localises to the cytoplasm. It catalyses the reaction tRNA(Cys) + L-cysteine + ATP = L-cysteinyl-tRNA(Cys) + AMP + diphosphate. The polypeptide is Cysteine--tRNA ligase (Streptomyces griseus subsp. griseus (strain JCM 4626 / CBS 651.72 / NBRC 13350 / KCC S-0626 / ISP 5235)).